Reading from the N-terminus, the 329-residue chain is Serine dehydratase-like (329 aa).

M1 bears the N-acetylmethionine mark. Residue K48 is modified to N6-(pyridoxal phosphate)lysine.

The protein belongs to the serine/threonine dehydratase family. Monomer. Homodimer. It depends on pyridoxal 5'-phosphate as a cofactor.

It carries out the reaction L-serine = pyruvate + NH4(+). It catalyses the reaction L-threonine = 2-oxobutanoate + NH4(+). The catalysed reaction is L-glutamate = D-glutamate. With respect to regulation, serine dehydratase activity is inhibited by manganese chloride, ferrous chloride, cobalt chloride, cupric chloride, nickel chloride and zinc chloride. Glutamate racemase activity is inhibited by manganese chloride, ferrous chloride, cupric chloride and zinc chloride. Its function is as follows. Catalyzes the pyridoxal-phosphate-dependent dehydrative deamination of L-threonine and L-serine to ammonia and alpha-ketobutyrate and pyruvate, respectively. Also exhibits racemase activity towards L-glutamate and D-glutamate. This chain is Serine dehydratase-like (Sdsl), found in Rattus norvegicus (Rat).